We begin with the raw amino-acid sequence, 402 residues long: Phosphoglycerate kinase (402 aa).

Substrate contacts are provided by residues 30 to 32, R46, 70 to 73, R126, and R159; these read DFN and HLGR. ATP-binding positions include K210, E332, and 358-361; that span reads GGDT.

Belongs to the phosphoglycerate kinase family. Monomer.

It is found in the cytoplasm. The catalysed reaction is (2R)-3-phosphoglycerate + ATP = (2R)-3-phospho-glyceroyl phosphate + ADP. It functions in the pathway carbohydrate degradation; glycolysis; pyruvate from D-glyceraldehyde 3-phosphate: step 2/5. This is Phosphoglycerate kinase from Helicobacter hepaticus (strain ATCC 51449 / 3B1).